Reading from the N-terminus, the 416-residue chain is Enterobactin exporter EntS (416 aa).

The Cytoplasmic portion of the chain corresponds to Met1–Ala21. Residues Val22–Val42 form a helical membrane-spanning segment. Topologically, residues Gln43 to Gly55 are periplasmic. A helical transmembrane segment spans residues Leu56–Ala76. Over Asp77–Lys83 the chain is Cytoplasmic. The helical transmembrane segment at Val84–Leu104 threads the bilayer. At Leu105–Ser109 the chain is on the periplasmic side. The chain crosses the membrane as a helical span at residues Leu110 to Ala130. Topologically, residues Leu131–Arg156 are cytoplasmic. Residues Leu157–Trp177 form a helical membrane-spanning segment. A topological domain (periplasmic) is located at residue Asn178. The helical transmembrane segment at Tyr179–Leu199 threads the bilayer. Over Pro200–Arg218 the chain is Cytoplasmic. Residues Phe219–Ala239 traverse the membrane as a helical segment. The Periplasmic segment spans residues Ser240–Ser256. A helical transmembrane segment spans residues Ala257–Thr277. Topologically, residues Ser278 to Pro287 are cytoplasmic. Residues Gly288 to Leu307 form a helical membrane-spanning segment. The Periplasmic portion of the chain corresponds to Met308–Leu313. The chain crosses the membrane as a helical span at residues Gly314–Leu336. Topologically, residues Gln337–Asn356 are cytoplasmic. The chain crosses the membrane as a helical span at residues Val357–Val377. Residue Ala378 is a topological domain, periplasmic. The helical transmembrane segment at Ser379–Val399 threads the bilayer. The Cytoplasmic segment spans residues Glu400–Ser416.

The protein belongs to the major facilitator superfamily. EntS (TC 2.A.1.38) family.

The protein resides in the cell inner membrane. Functionally, component of an export pathway for enterobactin. In Shigella boydii serotype 18 (strain CDC 3083-94 / BS512), this protein is Enterobactin exporter EntS.